Consider the following 328-residue polypeptide: MSVTSQTSSSGSAAVSDCHRGIIDISGPVPGYEWEPSMTTEPVRGRVWTITDGVFRTLAIEGDTGVIAVDTFWSPGSARQYRRALQSHFPRKPVHTIIYTHDHLDHTGFGADFAPDADQILAHELTAEVIARRSSDGQLPATRTWSGERLEVSIDGAEFELIYPGPTHGTGNTALYFPNERFLYMADTVFTGPTYNIVPDFLWTSWIPNTRRLLGLDWDLYVPGHFWRLSRREFEADFELWDATAACALDALRAGVDIDNFADVKKFTYERMDEPFGSRTFRFDEFAAINVLTHMVHYQTGGWGLRDYEPYSNEPFKTTLPQRLGSPL.

Positions 1–9 (MSVTSQTSS) are excised as a propeptide. The Zn(2+) site is built by histidine 101, histidine 103, aspartate 105, histidine 168, histidine 225, and cysteine 247.

Belongs to the metallo-beta-lactamase superfamily. As to quaternary structure, part of the complex DnhAB composed of the 2,4-dinitroanisole O-demethylase alpha (DnhA) and beta (DnhB) subunits. Zn(2+) is required as a cofactor.

It catalyses the reaction 2,4-dinitroanisole + H2O = 2,4-dinitrophenol + methanol + H(+). In terms of biological role, involved in the degradation of 2,4-dinitroanisole (DNAN), an insensitive munition ingredient used in explosive formulations as a replacement for 2,4,6-trinitrotoluene (TNT). Catalyzes the removal of the methyl group from 2,4-dinitroanisole (DNAN) to yield 2,4-dinitrophenol (2,4-DNP) and methanol. The polypeptide is 2,4-dinitroanisole O-demethylase subunit alpha (Nocardioides sp. (strain JS1661)).